Consider the following 153-residue polypeptide: Large ribosomal subunit protein uL22 (153 aa).

Residues 125–153 (EPKEARQARKKAKSGRPAAAAKSETEKGA) form a disordered region.

Belongs to the universal ribosomal protein uL22 family. In terms of assembly, part of the 50S ribosomal subunit.

Its function is as follows. This protein binds specifically to 23S rRNA; its binding is stimulated by other ribosomal proteins, e.g. L4, L17, and L20. It is important during the early stages of 50S assembly. It makes multiple contacts with different domains of the 23S rRNA in the assembled 50S subunit and ribosome. In terms of biological role, the globular domain of the protein is located near the polypeptide exit tunnel on the outside of the subunit, while an extended beta-hairpin is found that lines the wall of the exit tunnel in the center of the 70S ribosome. The sequence is that of Large ribosomal subunit protein uL22 from Cutibacterium acnes (strain DSM 16379 / KPA171202) (Propionibacterium acnes).